Reading from the N-terminus, the 465-residue chain is Mitochondrial distribution and morphology protein 10 (465 aa).

Belongs to the MDM10 family. In terms of assembly, component of the ER-mitochondria encounter structure (ERMES) or MDM complex, composed of MMM1, MDM10, MDM12 and MDM34. Associates with the mitochondrial outer membrane sorting assembly machinery SAM(core) complex.

The protein resides in the mitochondrion outer membrane. Component of the ERMES/MDM complex, which serves as a molecular tether to connect the endoplasmic reticulum and mitochondria. Components of this complex are involved in the control of mitochondrial shape and protein biogenesis and may function in phospholipid exchange. MDM10 is involved in the late assembly steps of the general translocase of the mitochondrial outer membrane (TOM complex). Functions in the TOM40-specific route of the assembly of outer membrane beta-barrel proteins, including the association of TOM40 with the receptor TOM22 and small TOM proteins. Can associate with the SAM(core) complex as well as the MDM12-MMM1 complex, both involved in late steps of the major beta-barrel assembly pathway, that is responsible for biogenesis of all outer membrane beta-barrel proteins. May act as a switch that shuttles between both complexes and channels precursor proteins into the TOM40-specific pathway. Plays a role in mitochondrial morphology and in the inheritance of mitochondria. The sequence is that of Mitochondrial distribution and morphology protein 10 from Eremothecium gossypii (strain ATCC 10895 / CBS 109.51 / FGSC 9923 / NRRL Y-1056) (Yeast).